We begin with the raw amino-acid sequence, 690 residues long: Glycine--tRNA ligase beta subunit (690 aa).

Belongs to the class-II aminoacyl-tRNA synthetase family. As to quaternary structure, tetramer of two alpha and two beta subunits.

It localises to the cytoplasm. It catalyses the reaction tRNA(Gly) + glycine + ATP = glycyl-tRNA(Gly) + AMP + diphosphate. The chain is Glycine--tRNA ligase beta subunit from Lactobacillus gasseri (strain ATCC 33323 / DSM 20243 / BCRC 14619 / CIP 102991 / JCM 1131 / KCTC 3163 / NCIMB 11718 / NCTC 13722 / AM63).